A 342-amino-acid chain; its full sequence is Isopentenyl-diphosphate delta-isomerase (342 aa).

11–12 (RK) lines the substrate pocket. Residues Ser68, 69 to 71 (SMT), Ser99, and Asn127 contribute to the FMN site. 99–101 (SMR) is a binding site for substrate. Position 162 (Gln162) interacts with substrate. Residue Glu163 participates in Mg(2+) binding. Residues Lys194, Thr224, 274 to 276 (GLK), and 295 to 296 (AG) contribute to the FMN site.

It belongs to the IPP isomerase type 2 family. As to quaternary structure, homooctamer. Dimer of tetramers. It depends on FMN as a cofactor. NADPH is required as a cofactor. The cofactor is Mg(2+).

The protein localises to the cytoplasm. It carries out the reaction isopentenyl diphosphate = dimethylallyl diphosphate. Involved in the biosynthesis of isoprenoids. Catalyzes the 1,3-allylic rearrangement of the homoallylic substrate isopentenyl (IPP) to its allylic isomer, dimethylallyl diphosphate (DMAPP). The polypeptide is Isopentenyl-diphosphate delta-isomerase (Rickettsia akari (strain Hartford)).